The primary structure comprises 735 residues: Muskelin (735 aa).

Alanine 2 bears the N-acetylalanine mark. The region spanning 172–204 (REQEAIRLCLKHFRQHNYTEAFESLQKKTKIAL) is the LisH domain. The region spanning 206–258 (HPMLTDIHDKLVLKGDFDACEELIEKAVNDGLFNQYISQQEYKPRWSQIIPKS) is the CTLH domain. 6 Kelch repeats span residues 284–330 (TVYL…SCHK), 339–391 (QIYT…FDHQ), 408–458 (ILTC…SRIG), 469–515 (CLYV…TGFT), 526–578 (EIHV…SLQE), and 597–651 (VHYL…AQVD).

In terms of assembly, homodimer; may form higher oligomers. Identified in the CTLH complex that contains GID4, RANBP9 and/or RANBP10, MKLN1, MAEA, RMND5A (or alternatively its paralog RMND5B), GID8, ARMC8, WDR26 and YPEL5. Within this complex, MAEA, RMND5A (or alternatively its paralog RMND5B), GID8, WDR26, and RANBP9 and/or RANBP10 form the catalytic core, while GID4, MKLN1, ARMC8 and YPEL5 have ancillary roles. Interacts with RANBP9. Part of a complex consisting of RANBP9, MKLN1 and GID8. Interacts with GABRA1. Interacts with the C-terminal tail of PTGER3.

It localises to the cytoplasm. The protein localises to the cytosol. The protein resides in the nucleus. It is found in the nucleoplasm. Its subcellular location is the cell projection. It localises to the ruffle. The protein localises to the cell cortex. The protein resides in the synapse. It is found in the postsynapse. Functionally, component of the CTLH E3 ubiquitin-protein ligase complex that selectively accepts ubiquitin from UBE2H and mediates ubiquitination and subsequent proteasomal degradation of the transcription factor HBP1. Required for internalization of the GABA receptor GABRA1 from the cell membrane via endosomes and subsequent GABRA1 degradation. Acts as a mediator of cell spreading and cytoskeletal responses to the extracellular matrix component THBS1. The sequence is that of Muskelin (MKLN1) from Homo sapiens (Human).